Reading from the N-terminus, the 155-residue chain is Acetylaranotin biosynthesis cluster protein L (155 aa).

The protein operates within mycotoxin biosynthesis. Functionally, nonribosomal peptide synthetase; part of the gene cluster that mediates the biosynthesis of acetylaranotin, a member of the epipolythiodioxopiperazine (ETP) class of toxins characterized by a disulfide-bridged cyclic dipeptide. The first step of acetylaranotin biosynthesis is performed by the NRPS ataP which produces diketopiperazine cyclo-L-Phe-L-Phe via the condensation of 2 phenylalanines (L-Phe). The ataC domain of ataTC then catalyzes the formation of bishydroxylation of cyclo-L-Phe-L-Phe. The glutathione S-transferase domain ataG in ataIMG further catalyzes the conjugation of two glutathiones to the bishydroxylated intermediate. Next, the dipeptidase ataJ removes the Glu residues. The following step is performed by the carbon sulfur lyase domain ataI of ataIMG which may convert the bis-cysteinyl adduct to yield an epidithiol intermediate. The ataT domain from ataTC then catalyzes the oxidation of the free dithiols, followed by a cyclization step catalyzed by the cytochrome P450 ataF. AtaF probably acts as an epoxidase to promote a dual epoxidation formation at C8 and C9 along with C8' and C9', followed by the spontaneous nucleophilic attack of the amide nitrogens N10 and N10' to yield an intermediate with the pyrrolidine partial structure. The final steps of acetylaranotin biosynthesis involve the acetylation and ring rearrangement of an epitetrathiodiketopiperazine intermediate to produce acetylaranotin. AtaH probably catalyzes the acetylation of epitetrathiodiketopiperazine to produce a diacetate and ataY is responsible for the formation of the dihydrooxepin moiety that converts the diacetate intermediate to acetylaranotin via acetylapoaranotin. Both enzymes could function independently in the absence of the other. The specific function of ataL within the pathway has still to be determined. The acetylaranotin bis-thiomethyltransferase ataS located outside of acetylaranotin gene cluster is the main thiomethyltransferase responsible for converting acetylaranotin and its related intermediates to their methylated forms. The polypeptide is Acetylaranotin biosynthesis cluster protein L (Aspergillus terreus (strain NIH 2624 / FGSC A1156)).